A 209-amino-acid polypeptide reads, in one-letter code: Small ribosomal subunit protein uS4 (209 aa).

Positions 98–164 constitute an S4 RNA-binding domain; sequence SRLDNVVYRG…TPFIVARETA (67 aa).

This sequence belongs to the universal ribosomal protein uS4 family. Part of the 30S ribosomal subunit. Contacts protein S5. The interaction surface between S4 and S5 is involved in control of translational fidelity.

In terms of biological role, one of the primary rRNA binding proteins, it binds directly to 16S rRNA where it nucleates assembly of the body of the 30S subunit. With S5 and S12 plays an important role in translational accuracy. In Frankia casuarinae (strain DSM 45818 / CECT 9043 / HFP020203 / CcI3), this protein is Small ribosomal subunit protein uS4.